The chain runs to 246 residues: MKKPDIQQLKDIVNNSNQIVFFTGAGVSVASGIPDFRSMGGLYDEISKDGQSPEYLLSIDHLHDNKESFINFYHERLLIADKKPNIVHQWIAQLENQQKSLGVITQNIDGLHEDAGSHNIDELHGTLNRFYCINCYEEYSKSYVMTHHLKYCEKCGNVIRPDIVLYGEMLNQKTVFKALDKIQHADTLIVLGSSLVVQPAAGFVSEFKGDNLVIINRDATPYDHTASLVIHDDMTSVIEEIVNSNS.

Residues 1–246 enclose the Deacetylase sirtuin-type domain; the sequence is MKKPDIQQLK…VIEEIVNSNS (246 aa). Residues Ala-25, Phe-36, Arg-37, Gln-106, Ile-108, Asp-109, and His-124 each coordinate NAD(+). Nicotinamide is bound at residue Phe-36. Ile-108 and Asp-109 together coordinate nicotinamide. Residue His-124 is the Proton acceptor of the active site. Residues Cys-132, Cys-135, Cys-152, and Cys-155 each coordinate Zn(2+). Residues Ser-193, Ser-194, Asn-216, and Asp-233 each coordinate NAD(+).

This sequence belongs to the sirtuin family. Class U subfamily. Zn(2+) is required as a cofactor.

The protein localises to the cytoplasm. It catalyses the reaction N(6)-acetyl-L-lysyl-[protein] + NAD(+) + H2O = 2''-O-acetyl-ADP-D-ribose + nicotinamide + L-lysyl-[protein]. Functionally, NAD-dependent protein deacetylase which modulates the activities of several enzymes which are inactive in their acetylated form. The protein is NAD-dependent protein deacetylase of Staphylococcus epidermidis (strain ATCC 12228 / FDA PCI 1200).